Reading from the N-terminus, the 212-residue chain is Interleukin-6 (212 aa).

A signal peptide spans 1–27; the sequence is MNSFSTSAFGPVAFSLGLLLVLPAAFP. C72 and C78 are oxidised to a cystine. The N-linked (GlcNAc...) asparagine glycan is linked to N73. S81 is modified (phosphoserine). A disulfide bridge links C101 with C111. Residue N172 is glycosylated (N-linked (GlcNAc...) asparagine).

The protein belongs to the IL-6 superfamily. As to quaternary structure, component of a hexamer of two molecules each of IL6, IL6R and IL6ST; first binds to IL6R to associate with the signaling subunit IL6ST. Interacts with IL6R (via the N-terminal ectodomain); this interaction may be affected by IL6R-binding with SORL1, hence decreasing IL6 cis signaling. Interacts with SORL1 (via the N-terminal ectodomain); this interaction leads to IL6 internalization and lysosomal degradation. May form a trimeric complex with the soluble SORL1 ectodomain and soluble IL6R receptor; this interaction might stabilize circulating IL6, hence promoting IL6 trans signaling.

It localises to the secreted. Cytokine with a wide variety of biological functions in immunity, tissue regeneration, and metabolism. Binds to IL6R, then the complex associates to the signaling subunit IL6ST/gp130 to trigger the intracellular IL6-signaling pathway. The interaction with the membrane-bound IL6R and IL6ST stimulates 'classic signaling', whereas the binding of IL6 and soluble IL6R to IL6ST stimulates 'trans-signaling'. Alternatively, 'cluster signaling' occurs when membrane-bound IL6:IL6R complexes on transmitter cells activate IL6ST receptors on neighboring receiver cells. In terms of biological role, IL6 is a potent inducer of the acute phase response. Rapid production of IL6 contributes to host defense during infection and tissue injury, but excessive IL6 synthesis is involved in disease pathology. In the innate immune response, is synthesized by myeloid cells, such as macrophages and dendritic cells, upon recognition of pathogens through toll-like receptors (TLRs) at the site of infection or tissue injury. In the adaptive immune response, is required for the differentiation of B cells into immunoglobulin-secreting cells. Plays a major role in the differentiation of CD4(+) T cell subsets. Essential factor for the development of T follicular helper (Tfh) cells that are required for the induction of germinal-center formation. Required to drive naive CD4(+) T cells to the Th17 lineage. Also required for proliferation of myeloma cells and the survival of plasmablast cells. Its function is as follows. Acts as an essential factor in bone homeostasis and on vessels directly or indirectly by induction of VEGF, resulting in increased angiogenesis activity and vascular permeability. Induces, through 'trans-signaling' and synergistically with IL1B and TNF, the production of VEGF. Involved in metabolic controls, is discharged into the bloodstream after muscle contraction increasing lipolysis and improving insulin resistance. 'Trans-signaling' in central nervous system also regulates energy and glucose homeostasis. Mediates, through GLP-1, crosstalk between insulin-sensitive tissues, intestinal L cells and pancreatic islets to adapt to changes in insulin demand. Also acts as a myokine. Plays a protective role during liver injury, being required for maintenance of tissue regeneration. Also has a pivotal role in iron metabolism by regulating HAMP/hepcidin expression upon inflammation or bacterial infection. Through activation of IL6ST-YAP-NOTCH pathway, induces inflammation-induced epithelial regeneration. This chain is Interleukin-6 (IL6), found in Macaca mulatta (Rhesus macaque).